The sequence spans 182 residues: Antigenic integral membrane glycoprotein (182 aa).

Residues M1–T35 form the signal peptide. Residues N88 and N120 are each glycosylated (N-linked (GlcNAc...) asparagine). Residues E162–Y180 form a helical membrane-spanning segment. C168 carries S-palmitoyl cysteine lipidation.

Its subcellular location is the cell membrane. Major antigen in the surface tegument. The sequence is that of Antigenic integral membrane glycoprotein from Schistosoma mansoni (Blood fluke).